Reading from the N-terminus, the 442-residue chain is Adenylosuccinate synthetase (442 aa).

GTP is bound by residues 30–36 (GDEGKGK) and 58–60 (GHT). Residue Asp-31 is the Proton acceptor of the active site. The Mg(2+) site is built by Asp-31 and Gly-58. IMP-binding positions include 31–34 (DEGK), 56–59 (NAGH), Thr-148, Arg-162, Asn-241, Thr-256, and Arg-320. His-59 functions as the Proton donor in the catalytic mechanism. 316 to 322 (TTTGRRR) contacts substrate. GTP contacts are provided by residues Arg-322, 348–350 (KLD), and 430–432 (GVG).

This sequence belongs to the adenylosuccinate synthetase family. As to quaternary structure, homodimer. Requires Mg(2+) as cofactor.

It is found in the cytoplasm. The catalysed reaction is IMP + L-aspartate + GTP = N(6)-(1,2-dicarboxyethyl)-AMP + GDP + phosphate + 2 H(+). Its pathway is purine metabolism; AMP biosynthesis via de novo pathway; AMP from IMP: step 1/2. Functionally, plays an important role in the de novo pathway and in the salvage pathway of purine nucleotide biosynthesis. Catalyzes the first committed step in the biosynthesis of AMP from IMP. This chain is Adenylosuccinate synthetase, found in Trichoplax adhaerens (Trichoplax reptans).